The sequence spans 172 residues: Translation initiation factor IF-3 (172 aa).

Belongs to the IF-3 family. In terms of assembly, monomer.

The protein resides in the cytoplasm. In terms of biological role, IF-3 binds to the 30S ribosomal subunit and shifts the equilibrium between 70S ribosomes and their 50S and 30S subunits in favor of the free subunits, thus enhancing the availability of 30S subunits on which protein synthesis initiation begins. The polypeptide is Translation initiation factor IF-3 (Bartonella quintana (strain Toulouse) (Rochalimaea quintana)).